Consider the following 116-residue polypeptide: Fluoride-specific ion channel FluC 1 (116 aa).

The next 4 membrane-spanning stretches (helical) occupy residues 1–21 (MYAP…RYLV), 32–52 (FPLG…WLAG), 54–74 (GAAD…FTTF), and 93–113 (VVVY…LGYH). Gly-69 and Thr-72 together coordinate Na(+).

This sequence belongs to the fluoride channel Fluc/FEX (TC 1.A.43) family.

It localises to the cell membrane. It carries out the reaction fluoride(in) = fluoride(out). Na(+) is not transported, but it plays an essential structural role and its presence is essential for fluoride channel function. In terms of biological role, fluoride-specific ion channel. Important for reducing fluoride concentration in the cell, thus reducing its toxicity. This is Fluoride-specific ion channel FluC 1 from Geobacillus kaustophilus (strain HTA426).